A 245-amino-acid chain; its full sequence is Carboxymethylenebutenolidase homolog (245 aa).

N-acetylalanine is present on Ala2. Residues Cys132, Asp179, and His212 contribute to the active site. Ser223 is subject to Phosphoserine.

The protein belongs to the dienelactone hydrolase family.

The protein localises to the cytoplasm. Its subcellular location is the cytosol. Cysteine hydrolase. The sequence is that of Carboxymethylenebutenolidase homolog (Cmbl) from Rattus norvegicus (Rat).